The sequence spans 82 residues: uncharacterized protein (82 aa).

2 helical membrane passes run 8 to 28 (LTTAAGILLMAFLSCLLLPAP) and 50 to 70 (LYTLLFCLWFLVLGAIEYFVL).

The protein resides in the cell membrane. This is an uncharacterized protein from Escherichia coli (strain K12).